Reading from the N-terminus, the 453-residue chain is Bifunctional protein GlmU (453 aa).

Residues 1–231 are pyrophosphorylase; it reads MERSSLAVIL…EKELTGCNNR (231 aa). UDP-N-acetyl-alpha-D-glucosamine-binding positions include 10-13, lysine 24, glutamine 77, 82-83, 105-107, glycine 143, glutamate 157, asparagine 172, and asparagine 229; these read LAAG, GT, and YGD. Residue aspartate 107 coordinates Mg(2+). Position 229 (asparagine 229) interacts with Mg(2+). The tract at residues 232-252 is linker; that stretch reads AELAFIERLWQERRRHELMVD. The segment at 253–453 is N-acetyltransferase; it reads GVSMIAPETV…AQKEAKKKSS (201 aa). Residues arginine 318 and lysine 336 each coordinate UDP-N-acetyl-alpha-D-glucosamine. The active-site Proton acceptor is the histidine 348. Residues tyrosine 351 and asparagine 362 each coordinate UDP-N-acetyl-alpha-D-glucosamine. Residues alanine 365, 371-372, serine 390, serine 408, and arginine 425 each bind acetyl-CoA; that span reads NY.

This sequence in the N-terminal section; belongs to the N-acetylglucosamine-1-phosphate uridyltransferase family. The protein in the C-terminal section; belongs to the transferase hexapeptide repeat family. As to quaternary structure, homotrimer. Mg(2+) is required as a cofactor.

The protein localises to the cytoplasm. It carries out the reaction alpha-D-glucosamine 1-phosphate + acetyl-CoA = N-acetyl-alpha-D-glucosamine 1-phosphate + CoA + H(+). It catalyses the reaction N-acetyl-alpha-D-glucosamine 1-phosphate + UTP + H(+) = UDP-N-acetyl-alpha-D-glucosamine + diphosphate. The protein operates within nucleotide-sugar biosynthesis; UDP-N-acetyl-alpha-D-glucosamine biosynthesis; N-acetyl-alpha-D-glucosamine 1-phosphate from alpha-D-glucosamine 6-phosphate (route II): step 2/2. It functions in the pathway nucleotide-sugar biosynthesis; UDP-N-acetyl-alpha-D-glucosamine biosynthesis; UDP-N-acetyl-alpha-D-glucosamine from N-acetyl-alpha-D-glucosamine 1-phosphate: step 1/1. Its pathway is bacterial outer membrane biogenesis; LPS lipid A biosynthesis. Its function is as follows. Catalyzes the last two sequential reactions in the de novo biosynthetic pathway for UDP-N-acetylglucosamine (UDP-GlcNAc). The C-terminal domain catalyzes the transfer of acetyl group from acetyl coenzyme A to glucosamine-1-phosphate (GlcN-1-P) to produce N-acetylglucosamine-1-phosphate (GlcNAc-1-P), which is converted into UDP-GlcNAc by the transfer of uridine 5-monophosphate (from uridine 5-triphosphate), a reaction catalyzed by the N-terminal domain. This chain is Bifunctional protein GlmU, found in Agrobacterium fabrum (strain C58 / ATCC 33970) (Agrobacterium tumefaciens (strain C58)).